Reading from the N-terminus, the 152-residue chain is SsrA-binding protein (152 aa).

Belongs to the SmpB family.

The protein localises to the cytoplasm. Functionally, required for rescue of stalled ribosomes mediated by trans-translation. Binds to transfer-messenger RNA (tmRNA), required for stable association of tmRNA with ribosomes. tmRNA and SmpB together mimic tRNA shape, replacing the anticodon stem-loop with SmpB. tmRNA is encoded by the ssrA gene; the 2 termini fold to resemble tRNA(Ala) and it encodes a 'tag peptide', a short internal open reading frame. During trans-translation Ala-aminoacylated tmRNA acts like a tRNA, entering the A-site of stalled ribosomes, displacing the stalled mRNA. The ribosome then switches to translate the ORF on the tmRNA; the nascent peptide is terminated with the 'tag peptide' encoded by the tmRNA and targeted for degradation. The ribosome is freed to recommence translation, which seems to be the essential function of trans-translation. The polypeptide is SsrA-binding protein (Helicobacter pylori (strain HPAG1)).